Here is a 549-residue protein sequence, read N- to C-terminus: 65-kDa microtubule-associated protein 9 (549 aa).

Coiled-coil stretches lie at residues 36–123, 160–199, and 459–492; these read IEIE…ERKI, SLRK…CSVL, and GNRL…HQGQ. Positions 474–549 are disordered; the sequence is EEKEQERRRK…SFSTPLSRHG (76 aa). Basic residues predominate over residues 481–490; the sequence is RRKRDLKKHQ. Phosphoserine occurs at positions 501 and 546. Residues 514–549 are compositionally biased toward polar residues; sequence VSTNKRFVSSPHTPQTDSPHSAKSNQSFSTPLSRHG.

It belongs to the MAP65/ASE1 family. As to quaternary structure, forms dimer. Binds to microtubules (MT).

It localises to the nucleus. It is found in the cytoplasm. The protein resides in the cytoskeleton. The protein localises to the spindle pole. The protein is 65-kDa microtubule-associated protein 9 (MAP65-9) of Arabidopsis thaliana (Mouse-ear cress).